A 483-amino-acid chain; its full sequence is MTKMDIRGAVDAAVPTNIIAAKAAEVRANKVNWQSYLQGQMISSEDCEFIQRFEMKRSPEEKQEMLQTEGSQCAKTFINLMTHISKEQTVQYILTMVDDTLQENHQRVSIFFDYAKRSKNTAWSYFLPMLNRQDLFTVHMAARIIAKLAAWGKELMEGSDLNYYFNWIKTQLASQKLRGSGVAVETGTVSSSDSSQYVQCVAGCLQLMLRVNEYRFAWVEADGVNCIMGVLSNKCGFQLQYQMIFSIWLLAFSPQMCEHLRRYNIIPVLSDILQESVKEKVTRIILAAFRNFLEKSTERETRQEYALALIQCKVLKQLENLEQQKYDDEDISEDIKFLLEKLGESVQDLSSFDEYSSELKSGRLEWSPVHKSEKFWRENAVRLNEKNYELLKILTKLLEVSDDPQVLAVAAHDVGEYVRHYPRGKRVIEQLGGKQLVMNHMHHEDQQVRYNALLAVQKLMVHNWEYLGKQLQSEQPQTAAARS.

Ser-483 carries the phosphoserine modification.

This sequence belongs to the V-ATPase H subunit family. In terms of assembly, V-ATPase is a heteromultimeric enzyme made up of two complexes: the ATP-hydrolytic V1 complex and the proton translocation V0 complex. The V1 complex consists of three catalytic AB heterodimers that form a heterohexamer, three peripheral stalks each consisting of EG heterodimers, one central rotor including subunits D and F, and the regulatory subunits C and H. The proton translocation complex V0 consists of the proton transport subunit a, a ring of proteolipid subunits c9c'', rotary subunit d, subunits e and f, and the accessory subunits ATP6AP1/Ac45 and ATP6AP2/PRR. Interacts with AP2M1.

It localises to the cytoplasmic vesicle. The protein resides in the clathrin-coated vesicle membrane. Its function is as follows. Subunit of the V1 complex of vacuolar(H+)-ATPase (V-ATPase), a multisubunit enzyme composed of a peripheral complex (V1) that hydrolyzes ATP and a membrane integral complex (V0) that translocates protons. V-ATPase is responsible for acidifying and maintaining the pH of intracellular compartments and in some cell types, is targeted to the plasma membrane, where it is responsible for acidifying the extracellular environment. Subunit H is essential for V-ATPase activity, but not for the assembly of the complex. Involved in the endocytosis mediated by clathrin-coated pits, required for the formation of endosomes. In Sus scrofa (Pig), this protein is V-type proton ATPase subunit H (ATP6V1H).